A 426-amino-acid polypeptide reads, in one-letter code: Adenylosuccinate synthetase (426 aa).

GTP-binding positions include 12-18 (GDEGKGK) and 40-42 (GHT). Aspartate 13 functions as the Proton acceptor in the catalytic mechanism. Mg(2+)-binding residues include aspartate 13 and glycine 40. Residues 13–16 (DEGK), 38–41 (NAGH), threonine 130, arginine 144, glutamine 224, threonine 239, and arginine 303 each bind IMP. The active-site Proton donor is the histidine 41. A substrate-binding site is contributed by 299–305 (TVTNRVR). GTP is bound by residues arginine 305, 331–333 (KLD), and 413–415 (STG).

It belongs to the adenylosuccinate synthetase family. Homodimer. The cofactor is Mg(2+).

The protein resides in the cytoplasm. It catalyses the reaction IMP + L-aspartate + GTP = N(6)-(1,2-dicarboxyethyl)-AMP + GDP + phosphate + 2 H(+). The protein operates within purine metabolism; AMP biosynthesis via de novo pathway; AMP from IMP: step 1/2. Plays an important role in the de novo pathway of purine nucleotide biosynthesis. Catalyzes the first committed step in the biosynthesis of AMP from IMP. In Anaplasma marginale (strain St. Maries), this protein is Adenylosuccinate synthetase.